A 290-amino-acid polypeptide reads, in one-letter code: Ankyrin repeat and SOCS box protein 9 (290 aa).

The residue at position 1 (Met-1) is an N-acetylmethionine. A compositionally biased stretch (basic and acidic residues) spans 1-11 (MDGEQRGRSDR). Positions 1-20 (MDGEQRGRSDRPGGSPHLPF) are disordered. ANK repeat units follow at residues 31–60 (SDWS…PVNI), 64–93 (DHVS…QVNG), 97–126 (DWRT…TPHP), 129–158 (ELAS…NIDY), 162–191 (HLGT…SVNQ), and 194–223 (GLDS…NAQA). One can recognise an SOCS box domain in the interval 236–290 (PLESPLIQIFLQNEGPQSLRQLCRLRIRKCFGIRQHHKISELLLPEDLKRFLLHL).

It belongs to the ankyrin SOCS box (ASB) family. Substrate-recognition component of the ECS(ASB9) complex, composed of ASB9, CUL5, ELOB, ELOC and RNF7/RBX2.

The protein resides in the mitochondrion. Its pathway is protein modification; protein ubiquitination. In terms of biological role, substrate-recognition component of a cullin-5-RING E3 ubiquitin-protein ligase complex (ECS complex, also named CRL5 complex), which mediates the ubiquitination and subsequent proteasomal degradation of target proteins. The ECS(ASB9) complex catalyzes ubiquitination of creatine kinases CKB and CKMT1A. This chain is Ankyrin repeat and SOCS box protein 9, found in Mus musculus (Mouse).